We begin with the raw amino-acid sequence, 282 residues long: HTH-type transcriptional activator RhaR (282 aa).

The region spanning 179 to 277 (DKLITALANS…GMTPSQWRHL (99 aa)) is the HTH araC/xylS-type domain. 2 DNA-binding regions (H-T-H motif) span residues 196-217 (DAFC…RAQT) and 244-267 (ISEI…TRET).

In terms of assembly, binds DNA as a dimer.

The protein resides in the cytoplasm. Its function is as follows. Activates expression of the rhaSR operon in response to L-rhamnose. The chain is HTH-type transcriptional activator RhaR from Salmonella arizonae (strain ATCC BAA-731 / CDC346-86 / RSK2980).